A 349-amino-acid polypeptide reads, in one-letter code: Microfibril-associated glycoprotein 3 (349 aa).

An N-terminal signal peptide occupies residues 1-21 (MKLHHCLSFLLVVTLVPAALS). Residues 22–139 (LEDVAPLGAN…TLRVIFTSGD (118 aa)) are Extracellular-facing. N31, N36, N63, and N103 each carry an N-linked (GlcNAc...) asparagine glycan. Positions 41 to 130 (PSFELSAGSY…SPARASYSVT (90 aa)) constitute an Ig-like C2-type domain. Cysteines 68 and 117 form a disulfide. Residues 140–160 (MSVYYMVVCLIAFTITLILNV) traverse the membrane as a helical segment. At 161–349 (TRLCLMSTHL…EGSIHHRVSI (189 aa)) the chain is on the cytoplasmic side. The disordered stretch occupies residues 280 to 349 (NPELGRSNSP…EGSIHHRVSI (70 aa)). Positions 311 to 331 (VHLQSETKSIGTDSQDSSHFS) are enriched in polar residues.

In terms of processing, glycosylated.

The protein localises to the cell membrane. Component of the elastin-associated microfibrils. The polypeptide is Microfibril-associated glycoprotein 3 (Mfap3) (Mus musculus (Mouse)).